The chain runs to 185 residues: Pyruvate/ketoisovalerate oxidoreductases common subunit gamma (185 aa).

Heterotetramer of one alpha, one beta, one delta and one gamma chain.

It carries out the reaction 2 oxidized [2Fe-2S]-[ferredoxin] + pyruvate + CoA = 2 reduced [2Fe-2S]-[ferredoxin] + acetyl-CoA + CO2 + H(+). It catalyses the reaction 3-methyl-2-oxobutanoate + 2 oxidized [2Fe-2S]-[ferredoxin] + CoA = 2-methylpropanoyl-CoA + 2 reduced [2Fe-2S]-[ferredoxin] + CO2 + H(+). The polypeptide is Pyruvate/ketoisovalerate oxidoreductases common subunit gamma (porG) (Pyrococcus furiosus (strain ATCC 43587 / DSM 3638 / JCM 8422 / Vc1)).